The chain runs to 87 residues: Small ribosomal subunit protein bS18 (87 aa).

The protein belongs to the bacterial ribosomal protein bS18 family. In terms of assembly, part of the 30S ribosomal subunit. Forms a tight heterodimer with protein bS6.

In terms of biological role, binds as a heterodimer with protein bS6 to the central domain of the 16S rRNA, where it helps stabilize the platform of the 30S subunit. The polypeptide is Small ribosomal subunit protein bS18 (Campylobacter hominis (strain ATCC BAA-381 / DSM 21671 / CCUG 45161 / LMG 19568 / NCTC 13146 / CH001A)).